A 145-amino-acid chain; its full sequence is MDHYLKKLQEIYTKLEGHPFLFSPSKTNEKEFITLLNQALASTQLYRSIQQLFLTMYKLDPIGFINYIKTSKQEYLCLLINPKLVTKFLKITSFKIYINFRLKTFYISPNKYNNFYTAPSEEKTNHLLKEEKTWAKIVEEGGEES.

It belongs to the asfivirus K145R family.

It is found in the virion. This is an uncharacterized protein from African swine fever virus (isolate Tick/South Africa/Pretoriuskop Pr4/1996) (ASFV).